The chain runs to 122 residues: Ribosome-binding factor A (122 aa).

Over residues 95–111 the composition is skewed to basic and acidic residues; that stretch reads PTVERVTRIQRTLREVS. Residues 95–122 are disordered; sequence PTVERVTRIQRTLREVSGEDGDGNGTQE.

The protein belongs to the RbfA family. In terms of assembly, monomer. Binds 30S ribosomal subunits, but not 50S ribosomal subunits or 70S ribosomes.

It localises to the cytoplasm. Its function is as follows. One of several proteins that assist in the late maturation steps of the functional core of the 30S ribosomal subunit. Associates with free 30S ribosomal subunits (but not with 30S subunits that are part of 70S ribosomes or polysomes). Required for efficient processing of 16S rRNA. May interact with the 5'-terminal helix region of 16S rRNA. The polypeptide is Ribosome-binding factor A (Rubrobacter xylanophilus (strain DSM 9941 / JCM 11954 / NBRC 16129 / PRD-1)).